The sequence spans 122 residues: Large ribosomal subunit protein uL18 (122 aa).

The protein belongs to the universal ribosomal protein uL18 family. Part of the 50S ribosomal subunit; part of the 5S rRNA/L5/L18/L25 subcomplex. Contacts the 5S and 23S rRNAs.

Its function is as follows. This is one of the proteins that bind and probably mediate the attachment of the 5S RNA into the large ribosomal subunit, where it forms part of the central protuberance. This chain is Large ribosomal subunit protein uL18, found in Desulfatibacillum aliphaticivorans.